We begin with the raw amino-acid sequence, 301 residues long: Structure-specific endonuclease subunit SLX1 (301 aa).

One can recognise a GIY-YIG domain in the interval 12-95 (AFYCCYLLRS…QHPYQTRFIK (84 aa)). The SLX1-type zinc finger occupies 216–283 (CAICEKIVDY…IPTSGQCPNC (68 aa)).

It belongs to the SLX1 family. As to quaternary structure, forms a heterodimer with SLX4. The cofactor is a divalent metal cation.

The protein resides in the nucleus. In terms of biological role, catalytic subunit of the SLX1-SLX4 structure-specific endonuclease that resolves DNA secondary structures generated during DNA repair and recombination. Has endonuclease activity towards branched DNA substrates, introducing single-strand cuts in duplex DNA close to junctions with ss-DNA. The sequence is that of Structure-specific endonuclease subunit SLX1 from Eremothecium gossypii (strain ATCC 10895 / CBS 109.51 / FGSC 9923 / NRRL Y-1056) (Yeast).